The chain runs to 214 residues: Rac-like GTP-binding protein 1 (214 aa).

Residues 17-24 (GDGAVGKT), 20-25 (AVGKTC), Thr-42, 64-68 (DTAGQ), Gly-67, 122-125 (TKLD), 123-125 (KLD), and 164-165 (SK) each bind GTP. The Effector region signature appears at 39–47 (YIPTVFDNF).

This sequence belongs to the small GTPase superfamily. Rho family. May interact with MPK1/MAPK6. Binds to RBOHB, preferentially in the GTP-bound form. Interacts with CCR1 in a GTP-dependent manner. In terms of processing, may be palmitoylated.

It localises to the cytoplasm. It is found in the membrane. In terms of biological role, small GTPase playing a general role in disease resistance signaling pathway. Acts downstream of heterotrimeric G protein alpha subunit. Regulates cell death and reactive oxygen species production, probably through NADPH oxidase. Also involved in sphingolipid elicitor (SE)-dependent defense signaling. Activates phytoalexin production and alters defense-related genes. Down-regulates metallothionein 2b, a reactive oxygen scavenger. May control lignin synthesis through regulation of both NADPH oxidase and CCR1 activities during defense responses. Stimulates lignin synthesis in suspension cell culture. This is Rac-like GTP-binding protein 1 (RAC1) from Oryza sativa subsp. japonica (Rice).